A 627-amino-acid chain; its full sequence is Pentatricopeptide repeat-containing protein At2g35030, mitochondrial (627 aa).

The N-terminal 44 residues, 1–44 (MQSRALSRLRSYYKRSSVFPSSDNDRSVQLFNLVRSIYSSSSRP), are a transit peptide targeting the mitochondrion. PPR repeat units follow at residues 45 to 75 (RVPQPEWLIGELCKVGKIAEARKLFDGLPER), 76 to 110 (DVVTWTHVITGYIKLGDMREARELFDRVDSRKNVV), 111 to 138 (TWTAMVSGYLRSKQLSIAEMLFQEMPER), 139 to 173 (NVVSWNTMIDGYAQSGRIDKALELFDEMPERNIVS), 174 to 200 (WNSMVKALVQRGRIDEAMNLFERMPRR), 201 to 235 (DVVSWTAMVDGLAKNGKVDEARRLFDCMPERNIIS), 236 to 262 (WNAMITGYAQNNRIDEADQLFQVMPER), 263 to 293 (DFASWNTMITGFIRNREMNKACGLFDRMPEK), 294 to 328 (NVISWTTMITGYVENKENEEALNVFSKMLRDGSVK), 330 to 360 (NVGTYVSILSACSDLAGLVEGQQIHQLISKS), 365 to 396 (NEIVTSALLNMYSKSGELIAARKMFDNGLVCQ), 398 to 432 (DLISWNSMIAVYAHHGHGKEAIEMYNQMRKHGFKP), 433 to 467 (SAVTYLNLLFACSHAGLVEKGMEFFKDLVRDESLP), and 469 to 499 (REEHYTCLVDLCGRAGRLKDVTNFINCDDAR). Positions 504-579 (FYGAILSACN…QPGCSWVKVG (76 aa)) are type E motif. The tract at residues 580–610 (KQNHLFVVGDKSHPQFEALDSILSDLRNKMR) is type E(+) motif.

It belongs to the PPR family. PCMP-E subfamily.

The protein resides in the mitochondrion. In Arabidopsis thaliana (Mouse-ear cress), this protein is Pentatricopeptide repeat-containing protein At2g35030, mitochondrial (PCMP-E15).